A 435-amino-acid polypeptide reads, in one-letter code: Methylenetetrahydrofolate--tRNA-(uracil-5-)-methyltransferase TrmFO (435 aa).

Position 10 to 15 (10 to 15 (GAGLAG)) interacts with FAD.

This sequence belongs to the MnmG family. TrmFO subfamily. Homodimer. It depends on FAD as a cofactor.

The protein resides in the cytoplasm. It catalyses the reaction uridine(54) in tRNA + (6R)-5,10-methylene-5,6,7,8-tetrahydrofolate + NADH + H(+) = 5-methyluridine(54) in tRNA + (6S)-5,6,7,8-tetrahydrofolate + NAD(+). It carries out the reaction uridine(54) in tRNA + (6R)-5,10-methylene-5,6,7,8-tetrahydrofolate + NADPH + H(+) = 5-methyluridine(54) in tRNA + (6S)-5,6,7,8-tetrahydrofolate + NADP(+). Its function is as follows. Catalyzes the folate-dependent formation of 5-methyl-uridine at position 54 (M-5-U54) in all tRNAs. The protein is Methylenetetrahydrofolate--tRNA-(uracil-5-)-methyltransferase TrmFO of Bacillus subtilis (strain 168).